Consider the following 311-residue polypeptide: Acetyl-coenzyme A carboxylase carboxyl transferase subunit alpha (311 aa).

The region spanning 36–286 (NLSKEISKVY…ANYFISELAE (251 aa)) is the CoA carboxyltransferase C-terminal domain.

It belongs to the AccA family. In terms of assembly, acetyl-CoA carboxylase is a heterohexamer composed of biotin carboxyl carrier protein (AccB), biotin carboxylase (AccC) and two subunits each of ACCase subunit alpha (AccA) and ACCase subunit beta (AccD).

It localises to the cytoplasm. The catalysed reaction is N(6)-carboxybiotinyl-L-lysyl-[protein] + acetyl-CoA = N(6)-biotinyl-L-lysyl-[protein] + malonyl-CoA. It functions in the pathway lipid metabolism; malonyl-CoA biosynthesis; malonyl-CoA from acetyl-CoA: step 1/1. Functionally, component of the acetyl coenzyme A carboxylase (ACC) complex. First, biotin carboxylase catalyzes the carboxylation of biotin on its carrier protein (BCCP) and then the CO(2) group is transferred by the carboxyltransferase to acetyl-CoA to form malonyl-CoA. The protein is Acetyl-coenzyme A carboxylase carboxyl transferase subunit alpha of Campylobacter concisus (strain 13826).